We begin with the raw amino-acid sequence, 238 residues long: Flagellar L-ring protein (238 aa).

The N-terminal stretch at 1-17 (MIRKTLAASCAVLLMAG) is a signal peptide. The N-palmitoyl cysteine moiety is linked to residue cysteine 18. Residue cysteine 18 is the site of S-diacylglycerol cysteine attachment.

This sequence belongs to the FlgH family. In terms of assembly, the basal body constitutes a major portion of the flagellar organelle and consists of four rings (L,P,S, and M) mounted on a central rod.

It localises to the cell outer membrane. The protein resides in the bacterial flagellum basal body. Its function is as follows. Assembles around the rod to form the L-ring and probably protects the motor/basal body from shearing forces during rotation. The sequence is that of Flagellar L-ring protein from Nitratidesulfovibrio vulgaris (strain ATCC 29579 / DSM 644 / CCUG 34227 / NCIMB 8303 / VKM B-1760 / Hildenborough) (Desulfovibrio vulgaris).